The chain runs to 674 residues: DNA ligase (674 aa).

NAD(+) contacts are provided by residues 31–35, 80–81, and E110; these read DYEYD and SL. The active-site N6-AMP-lysine intermediate is the K112. 4 residues coordinate NAD(+): R133, E167, K283, and K307. Zn(2+)-binding residues include C401, C404, C419, and C424. The region spanning 584 to 673 is the BRCT domain; it reads KVEKIFEGMK…SKDEVKAVLE (90 aa).

This sequence belongs to the NAD-dependent DNA ligase family. LigA subfamily. Mg(2+) is required as a cofactor. The cofactor is Mn(2+).

It carries out the reaction NAD(+) + (deoxyribonucleotide)n-3'-hydroxyl + 5'-phospho-(deoxyribonucleotide)m = (deoxyribonucleotide)n+m + AMP + beta-nicotinamide D-nucleotide.. Its function is as follows. DNA ligase that catalyzes the formation of phosphodiester linkages between 5'-phosphoryl and 3'-hydroxyl groups in double-stranded DNA using NAD as a coenzyme and as the energy source for the reaction. It is essential for DNA replication and repair of damaged DNA. This Clostridioides difficile (strain 630) (Peptoclostridium difficile) protein is DNA ligase.